Here is a 101-residue protein sequence, read N- to C-terminus: Chaperone modulatory protein CbpM (101 aa).

The protein belongs to the CbpM family.

Its function is as follows. Interacts with CbpA and inhibits both the DnaJ-like co-chaperone activity and the DNA binding activity of CbpA. Together with CbpA, modulates the activity of the DnaK chaperone system. Does not inhibit the co-chaperone activity of DnaJ. The polypeptide is Chaperone modulatory protein CbpM (Pseudomonas putida (strain ATCC 700007 / DSM 6899 / JCM 31910 / BCRC 17059 / LMG 24140 / F1)).